The chain runs to 697 residues: Probable glutamine--tRNA ligase (697 aa).

The 'HIGH' region motif lies at 204 to 214 (PEPNGILHIGH). ATP-binding positions include 205-207 (EPN) and 211-217 (HIGHAKA). Residues D237 and Y386 each coordinate L-glutamine. Residues T405, 434-435 (RL), and 442-444 (LSK) each bind ATP. A 'KMSKS' region motif is present at residues 441 to 445 (VLSKR).

The protein belongs to the class-I aminoacyl-tRNA synthetase family.

The catalysed reaction is tRNA(Gln) + L-glutamine + ATP = L-glutaminyl-tRNA(Gln) + AMP + diphosphate. This Encephalitozoon cuniculi (strain GB-M1) (Microsporidian parasite) protein is Probable glutamine--tRNA ligase.